The sequence spans 88 residues: Small ribosomal subunit protein uS15 (88 aa).

This sequence belongs to the universal ribosomal protein uS15 family. As to quaternary structure, part of the 30S ribosomal subunit. Forms a bridge to the 50S subunit in the 70S ribosome, contacting the 23S rRNA.

In terms of biological role, one of the primary rRNA binding proteins, it binds directly to 16S rRNA where it helps nucleate assembly of the platform of the 30S subunit by binding and bridging several RNA helices of the 16S rRNA. Functionally, forms an intersubunit bridge (bridge B4) with the 23S rRNA of the 50S subunit in the ribosome. This Trichlorobacter lovleyi (strain ATCC BAA-1151 / DSM 17278 / SZ) (Geobacter lovleyi) protein is Small ribosomal subunit protein uS15.